The following is a 318-amino-acid chain: NADH-ubiquinone oxidoreductase chain 1 (318 aa).

A run of 8 helical transmembrane segments spans residues 2 to 22, 68 to 88, 100 to 120, 146 to 166, 171 to 191, 213 to 233, 253 to 273, and 285 to 305; these read PMTN…FLML, ITLY…LWTP, LGLL…LWSG, LAII…STLV, HLWL…STLA, IEYA…NIIM, ELYT…FLWI, and LMHL…MWYI.

The protein belongs to the complex I subunit 1 family. Core subunit of respiratory chain NADH dehydrogenase (Complex I) which is composed of 45 different subunits.

The protein resides in the mitochondrion inner membrane. It catalyses the reaction a ubiquinone + NADH + 5 H(+)(in) = a ubiquinol + NAD(+) + 4 H(+)(out). Functionally, core subunit of the mitochondrial membrane respiratory chain NADH dehydrogenase (Complex I) which catalyzes electron transfer from NADH through the respiratory chain, using ubiquinone as an electron acceptor. Essential for the catalytic activity and assembly of complex I. This is NADH-ubiquinone oxidoreductase chain 1 (MT-ND1) from Pan troglodytes (Chimpanzee).